The chain runs to 615 residues: Homologous recombination OB-fold protein (615 aa).

Disordered regions lie at residues 42 to 75 (LRPV…PRLC), 213 to 326 (PWPS…PVTQ), and 546 to 590 (DFLE…FPEE). Ser47 carries the post-translational modification Phosphoserine. Polar residues-rich tracts occupy residues 47-71 (SRPQ…NQSV), 232-241 (SCVSTSQQRG), and 257-275 (IRSS…SPRA). Over residues 302–317 (SSRAPVSSVESPVSTP) the composition is skewed to low complexity.

Interacts with MCM8; this interaction is necessary for MCM8-MCM9 helicase complex recruitment to DNA damage sites. Interacts with RPA1; this interaction associates HROB with the RPA complex.

The protein resides in the nucleus. Its subcellular location is the chromosome. Its function is as follows. DNA-binding protein involved in homologous recombination that acts by recruiting the MCM8-MCM9 helicase complex to sites of DNA damage to promote DNA repair synthesis. In Mus musculus (Mouse), this protein is Homologous recombination OB-fold protein.